We begin with the raw amino-acid sequence, 224 residues long: Superoxide dismutase [Mn], mitochondrial (224 aa).

Residues 1 to 20 (MLLARAFARRSLRAGLWCRQ) constitute a mitochondrion transit peptide. Residues H46, H94, D177, and H181 each coordinate Mn(2+).

This sequence belongs to the iron/manganese superoxide dismutase family. As to quaternary structure, homotetramer. Mn(2+) is required as a cofactor.

It localises to the mitochondrion matrix. The catalysed reaction is 2 superoxide + 2 H(+) = H2O2 + O2. Functionally, destroys superoxide anion radicals which are normally produced within the cells and which are toxic to biological systems. The chain is Superoxide dismutase [Mn], mitochondrial from Charybdis feriata (Crucifix crab).